Reading from the N-terminus, the 189-residue chain is Effector protein NleF (189 aa).

Residues 186–189 form an interaction with host caspases region; that stretch reads LQCG.

As to quaternary structure, monomer. Interacts (via C-terminus) with human CASP4, CASP8 and CASP9.

The protein localises to the secreted. It localises to the host cytoplasm. Its function is as follows. Effector protein that alters host cell physiology and promotes bacterial survival in host tissues. Inhibits the catalytic activity of human CASP4, CASP8 and CASP9, and thereby inhibits apoptosis of infected host cells. The chain is Effector protein NleF (nleF) from Escherichia coli O157:H7.